A 614-amino-acid chain; its full sequence is Fem-3 mRNA-binding factor 1 (614 aa).

Over residues 1–24 (MDQSKMRYTNQFRKTPQKPTSTEV) the composition is skewed to polar residues. Residues 1–34 (MDQSKMRYTNQFRKTPQKPTSTEVGNHHTPAHSP) form a disordered region. Residues 160–564 (TRSNNVLPTW…KMIETLAHLR (405 aa)) form the PUM-HD domain. Pumilio repeat units follow at residues 185-223 (EVLDSGDLMKFAVDKTGCQFLEKAVKGSLTSYQKFQLFE), 224-263 (QVIGRKDDFLKLSTNIFGNYFVQEIIGMSLTTYDDDNIKR), 269-305 (NFISSQMTDMCLDKFACRVIQSSLQNMDLSLACKLVQ), 306-342 (ALPRDARLIAICVDQNANHVIQKVVAVIPLKNWEFIV), 343-382 (DFVATPEHLRQICFDKYGCRVVQTIIEKLTADSINVDLTS), 398-434 (SVTNRCQELATNEYANYIIQHIVSNDDLAVYRECIIE), 436-471 (CLMRNLLSLSQEKFASHVVEKAFLHAPMELLAEMMD), and 483-519 (TGKDALDIMMFHQFGNYVVQCMLTICCDAVSGRRQTK). The binding to gld-3 isoform A stretch occupies residues 283–614 (FACRVIQSSL…NLRLMRTFSP (332 aa)).

Interacts (via C-terminus) with gld-3 isoform A in an RNA-independent manner. In terms of tissue distribution, expressed specifically in the germline (at protein level).

Its subcellular location is the cytoplasm. Functionally, RNA-binding protein that binds to the consensus sequence 5'-UGUGCCAUA-3' in mRNA 3'-UTRs. Involved in the control of stem cells and sex determination in the C.elegans hermaphrodite germline. May also play a role in the hermaphrodite germline proliferation and oogenesis. Binds specifically to the regulatory region of fem-3 3'-UTR and mediates the sperm/oocyte switch. Negatively regulates gld-3 expression, possibly by directly binding to two sites within the 3'-UTR of gld-3 isoform b. In association with the cye-1/cdk-2 complex, negatively regulates gld-1 expression in the distal germline cells of the mitotic zone. By binding to the 3'-UTR, represses phosphatase lip-1 expression in the distal part of the germline mitotic zone. Suppresses germline tumor formation by preventing the dedifferentiation of secondary spermatocytes. The sequence is that of Fem-3 mRNA-binding factor 1 (fbf-1) from Caenorhabditis elegans.